The sequence spans 162 residues: Nucleotide-binding protein SGR_2909 (162 aa).

Belongs to the YajQ family.

Nucleotide-binding protein. The protein is Nucleotide-binding protein SGR_2909 of Streptomyces griseus subsp. griseus (strain JCM 4626 / CBS 651.72 / NBRC 13350 / KCC S-0626 / ISP 5235).